A 332-amino-acid chain; its full sequence is Glycerol-3-phosphate dehydrogenase [NAD(P)+] (332 aa).

3 residues coordinate NADPH: Trp11, Arg30, and Lys108. Sn-glycerol 3-phosphate-binding residues include Lys108, Gly137, and Ser139. Ala141 contributes to the NADPH binding site. Lys192, Asp245, Ser255, Arg256, and Asn257 together coordinate sn-glycerol 3-phosphate. Lys192 acts as the Proton acceptor in catalysis. Arg256 contacts NADPH. Residues Val280 and Glu282 each coordinate NADPH.

The protein belongs to the NAD-dependent glycerol-3-phosphate dehydrogenase family.

Its subcellular location is the cytoplasm. It catalyses the reaction sn-glycerol 3-phosphate + NAD(+) = dihydroxyacetone phosphate + NADH + H(+). It carries out the reaction sn-glycerol 3-phosphate + NADP(+) = dihydroxyacetone phosphate + NADPH + H(+). It participates in membrane lipid metabolism; glycerophospholipid metabolism. Its function is as follows. Catalyzes the reduction of the glycolytic intermediate dihydroxyacetone phosphate (DHAP) to sn-glycerol 3-phosphate (G3P), the key precursor for phospholipid synthesis. This Burkholderia orbicola (strain MC0-3) protein is Glycerol-3-phosphate dehydrogenase [NAD(P)+].